Consider the following 1103-residue polypeptide: Platelet-derived growth factor receptor beta (1103 aa).

The first 31 residues, 1 to 31 (MQVPGTMPAPVLKGQALWLPLLLMLSPQASG), serve as a signal peptide directing secretion. 5 Ig-like C2-type domains span residues 33–120 (LVIT…YIFV), 129–210 (PVDP…YSLQ), 214–309 (INVS…INVT), 331–403 (HRSR…HEDA), and 416–524 (PVRV…VTVV). Topologically, residues 33–532 (LVITPPGPEL…VVPHSLPFKV (500 aa)) are extracellular. N-linked (GlcNAc...) asparagine glycosylation is found at N45 and N89. 2 disulfides stabilise this stretch: C54-C100 and C149-C190. Residues N215 and N230 are each glycosylated (N-linked (GlcNAc...) asparagine). An intrachain disulfide couples C235 to C291. N-linked (GlcNAc...) asparagine glycosylation is found at N292, N307, N354, N371, N468, and N479. C436 and C508 are oxidised to a cystine. Residues 533-553 (VVISAILALVVLTIISLIILI) form a helical membrane-spanning segment. At 554–1103 (MLWQKKPRYE…PRAEAEDSFL (550 aa)) the chain is on the cytoplasmic side. Residues Y562, Y579, and Y581 each carry the phosphotyrosine; by autocatalysis modification. The region spanning 600-962 (LVLGRTLGSG…QLVLLLERLL (363 aa)) is the Protein kinase domain. ATP-binding positions include 606–614 (LGSGAFGQV) and K634. Y686 carries the phosphotyrosine; by ABL1 and ABL2 modification. A phosphotyrosine; by autocatalysis mark is found at Y716, Y740, Y751, Y763, Y771, Y775, and Y778. D826 serves as the catalytic Proton acceptor. Y857 is modified (phosphotyrosine; by autocatalysis). A phosphotyrosine; by ABL1 and ABL2 mark is found at Y934 and Y970. Y1009 and Y1021 each carry phosphotyrosine; by autocatalysis. Residues 1017 to 1103 (GDNDYIIPLP…PRAEAEDSFL (87 aa)) are disordered. Residues 1039 to 1059 (SSPSLASSTLNEVNTSSTISC) are compositionally biased toward polar residues. Acidic residues predominate over residues 1065-1075 (PQEEPEPEPEP). Over residues 1076–1086 (QPEPQVVPEPP) the composition is skewed to pro residues.

It belongs to the protein kinase superfamily. Tyr protein kinase family. CSF-1/PDGF receptor subfamily. In terms of assembly, interacts with homodimeric PDGFB and PDGFD, and with heterodimers formed by PDGFA and PDGFB. May also interact with homodimeric PDGFC. Monomer in the absence of bound ligand. Interaction with homodimeric PDGFB, heterodimers formed by PDGFA and PDGFB or homodimeric PDGFD, leads to receptor dimerization, where both PDGFRA homodimers and heterodimers with PDGFRB are observed. Interacts with SH2B2/APS. Interacts directly (tyrosine phosphorylated) with SHB. Interacts (tyrosine phosphorylated) with PIK3R1 and RASA1. Interacts (tyrosine phosphorylated) with CBL. Interacts (tyrosine phosphorylated) with SRC and SRC family kinases. Interacts (tyrosine phosphorylated) with PIK3C2B, maybe indirectly. Interacts (tyrosine phosphorylated) with SHC1, GRB7, GRB10 and NCK1. Interaction with GRB2 is mediated by SHC1. Interacts (via C-terminus) with NHERF1. N-glycosylated. In terms of processing, ubiquitinated. After autophosphorylation, the receptor is polyubiquitinated, leading to its degradation. Post-translationally, autophosphorylated on tyrosine residues upon ligand binding. Autophosphorylation occurs in trans, i.e. one subunit of the dimeric receptor phosphorylates tyrosine residues on the other subunit. Phosphorylation at Tyr-579, and to a lesser degree, Tyr-581 is important for interaction with SRC. Phosphorylation at Tyr-716 is important for interaction with GRB2. Phosphorylation at Tyr-740 and Tyr-751 is important for interaction with PIK3R1. Phosphorylation at Tyr-751 is important for interaction with NCK1. Phosphorylation at Tyr-771 and Tyr-857 is important for interaction with RASA1/GAP. Phosphorylation at Tyr-857 is important for efficient phosphorylation of PLCG1 and PTPN11, resulting in increased phosphorylation of AKT1, MAPK1/ERK2 and/or MAPK3/ERK1, PDCD6IP/ALIX and STAM, and in increased cell proliferation. Phosphorylation at Tyr-1009 is important for interaction with PTPN11. Phosphorylation at Tyr-1009 and Tyr-1021 is important for interaction with PLCG1. Dephosphorylated by PTPRJ at Tyr-751, Tyr-857, Tyr-1009 and Tyr-1021. Dephosphorylated by PTPN2 at Tyr-579 and Tyr-1021.

It localises to the cell membrane. It is found in the cytoplasmic vesicle. Its subcellular location is the lysosome lumen. The catalysed reaction is L-tyrosyl-[protein] + ATP = O-phospho-L-tyrosyl-[protein] + ADP + H(+). With respect to regulation, present in an inactive conformation in the absence of bound ligand. Binding of PDGFB and/or PDGFD leads to dimerization and activation by autophosphorylation on tyrosine residues. Functionally, tyrosine-protein kinase that acts as a cell-surface receptor for homodimeric PDGFB and PDGFD and for heterodimers formed by PDGFA and PDGFB, and plays an essential role in the regulation of embryonic development, cell proliferation, survival, differentiation, chemotaxis and migration. Plays an essential role in blood vessel development by promoting proliferation, migration and recruitment of pericytes and smooth muscle cells to endothelial cells. Plays a role in the migration of vascular smooth muscle cells and the formation of neointima at vascular injury sites. Required for normal development of the cardiovascular system. Required for normal recruitment of pericytes (mesangial cells) in the kidney glomerulus, and for normal formation of a branched network of capillaries in kidney glomeruli. Promotes rearrangement of the actin cytoskeleton and the formation of membrane ruffles. Binding of its cognate ligands - homodimeric PDGFB, heterodimers formed by PDGFA and PDGFB or homodimeric PDGFD -leads to the activation of several signaling cascades; the response depends on the nature of the bound ligand and is modulated by the formation of heterodimers between PDGFRA and PDGFRB. Phosphorylates PLCG1, PIK3R1, PTPN11, RASA1/GAP, CBL, SHC1 and NCK1. Activation of PLCG1 leads to the production of the cellular signaling molecules diacylglycerol and inositol 1,4,5-trisphosphate, mobilization of cytosolic Ca(2+) and the activation of protein kinase C. Phosphorylation of PIK3R1, the regulatory subunit of phosphatidylinositol 3-kinase, leads to the activation of the AKT1 signaling pathway. Phosphorylation of SHC1, or of the C-terminus of PTPN11, creates a binding site for GRB2, resulting in the activation of HRAS, RAF1 and down-stream MAP kinases, including MAPK1/ERK2 and/or MAPK3/ERK1. Promotes phosphorylation and activation of SRC family kinases. Promotes phosphorylation of PDCD6IP/ALIX and STAM. Receptor signaling is down-regulated by protein phosphatases that dephosphorylate the receptor and its down-stream effectors, and by rapid internalization of the activated receptor. In Canis lupus familiaris (Dog), this protein is Platelet-derived growth factor receptor beta (PDGFRB).